The chain runs to 208 residues: Putative thymidylate kinase (208 aa).

Positions 12–19 are defective ATP-binding; the sequence is GIDGTGTS.

It belongs to the thymidylate kinase family.

It catalyses the reaction dTMP + ATP = dTDP + ADP. In Treponema pallidum (strain Nichols), this protein is Putative thymidylate kinase (tmk).